The primary structure comprises 408 residues: tRNA-specific 2-thiouridylase MnmA (408 aa).

ATP is bound by residues 27–34 (AMSGGVDS) and Leu-53. Cys-121 (nucleophile) is an active-site residue. Cys-121 and Cys-222 are joined by a disulfide. Gly-145 lines the ATP pocket. The interaction with tRNA stretch occupies residues 172-174 (RDQ). The active-site Cysteine persulfide intermediate is the Cys-222.

It belongs to the MnmA/TRMU family.

It localises to the cytoplasm. It carries out the reaction S-sulfanyl-L-cysteinyl-[protein] + uridine(34) in tRNA + AH2 + ATP = 2-thiouridine(34) in tRNA + L-cysteinyl-[protein] + A + AMP + diphosphate + H(+). In terms of biological role, catalyzes the 2-thiolation of uridine at the wobble position (U34) of tRNA, leading to the formation of s(2)U34. In Rhizobium etli (strain ATCC 51251 / DSM 11541 / JCM 21823 / NBRC 15573 / CFN 42), this protein is tRNA-specific 2-thiouridylase MnmA.